The primary structure comprises 336 residues: Pyridoxal 5'-phosphate synthase subunit PdxS (336 aa).

D62 contributes to the D-ribose 5-phosphate binding site. The Schiff-base intermediate with D-ribose 5-phosphate role is filled by K119. G191 serves as a coordination point for D-ribose 5-phosphate. K203 serves as a coordination point for D-glyceraldehyde 3-phosphate. D-ribose 5-phosphate contacts are provided by residues G254 and 275–276 (GS).

The protein belongs to the PdxS/SNZ family. In the presence of PdxT, forms a dodecamer of heterodimers.

It carries out the reaction aldehydo-D-ribose 5-phosphate + D-glyceraldehyde 3-phosphate + L-glutamine = pyridoxal 5'-phosphate + L-glutamate + phosphate + 3 H2O + H(+). Its pathway is cofactor biosynthesis; pyridoxal 5'-phosphate biosynthesis. Functionally, catalyzes the formation of pyridoxal 5'-phosphate from ribose 5-phosphate (RBP), glyceraldehyde 3-phosphate (G3P) and ammonia. The ammonia is provided by the PdxT subunit. Can also use ribulose 5-phosphate and dihydroxyacetone phosphate as substrates, resulting from enzyme-catalyzed isomerization of RBP and G3P, respectively. This chain is Pyridoxal 5'-phosphate synthase subunit PdxS, found in Pyrobaculum calidifontis (strain DSM 21063 / JCM 11548 / VA1).